A 294-amino-acid chain; its full sequence is ATP synthase gamma chain (294 aa).

It belongs to the ATPase gamma chain family. As to quaternary structure, F-type ATPases have 2 components, CF(1) - the catalytic core - and CF(0) - the membrane proton channel. CF(1) has five subunits: alpha(3), beta(3), gamma(1), delta(1), epsilon(1). CF(0) has three main subunits: a, b and c.

It is found in the cell inner membrane. Functionally, produces ATP from ADP in the presence of a proton gradient across the membrane. The gamma chain is believed to be important in regulating ATPase activity and the flow of protons through the CF(0) complex. The chain is ATP synthase gamma chain from Caulobacter sp. (strain K31).